An 850-amino-acid polypeptide reads, in one-letter code: G-type lectin S-receptor-like serine/threonine-protein kinase CES101 (850 aa).

An N-terminal signal peptide occupies residues 1-22; it reads MWSNCIFLTLFTFYLFLGQSCC. Topologically, residues 23–423 are extracellular; it reads QTDTLLQGQY…IKGSKLAATW (401 aa). One can recognise a Bulb-type lectin domain in the interval 24–144; that stretch reads TDTLLQGQYL…DSDGSMKRTL (121 aa). Asparagine 55, asparagine 118, asparagine 194, and asparagine 374 each carry an N-linked (GlcNAc...) asparagine glycan. The 83-residue stretch at 334–416 folds into the PAN domain; the sequence is CSRFGYTFRE…PRTIYIRIKG (83 aa). 2 disulfide bridges follow: cysteine 367–cysteine 390 and cysteine 371–cysteine 377. A helical transmembrane segment spans residues 424-444; sequence LVVVASLFLIIPVTWLIIYLV. At 445–850 the chain is on the cytoplasmic side; it reads LRKFKIKGTN…RVTITVMEAR (406 aa). The Protein kinase domain occupies 527 to 816; it reads FSDANKLGEG…ALSLPKEPAF (290 aa). Residues 533–541 and lysine 555 each bind ATP; that span reads LGEGGFGPV. Residue serine 561 is modified to Phosphoserine. A caM-binding region spans residues 616 to 633; the sequence is LRKIVLDWKLRFRIMEGI. Catalysis depends on aspartate 652, which acts as the Proton acceptor. Phosphoserine is present on serine 669. Position 686 is a phosphothreonine (threonine 686). Serine 730 and serine 838 each carry phosphoserine. Threonine 845 bears the Phosphothreonine mark.

Belongs to the protein kinase superfamily. Ser/Thr protein kinase family. Mostly expressed in leaves, and, to a lower extent, in roots and flowers.

The protein resides in the cell membrane. The enzyme catalyses L-seryl-[protein] + ATP = O-phospho-L-seryl-[protein] + ADP + H(+). It carries out the reaction L-threonyl-[protein] + ATP = O-phospho-L-threonyl-[protein] + ADP + H(+). Promotes the expression of genes involved in photosynthesis at least in dedifferentiated calli. The polypeptide is G-type lectin S-receptor-like serine/threonine-protein kinase CES101 (CES101) (Arabidopsis thaliana (Mouse-ear cress)).